Here is a 204-residue protein sequence, read N- to C-terminus: Bcl-2-like protein 10 (204 aa).

Positions 86–105 (LSDSPGPTWGRVVTLVTFAG) match the BH1 motif. A required for Ca(2+) binding region spans residues 118–133 (WKKWGFQPRLKEQEGD). Glycyl lysine isopeptide (Lys-Gly) (interchain with G-Cter in ubiquitin) cross-links involve residues lysine 119, lysine 120, and lysine 128. A BH2 motif is present at residues 156–167 (WLQAQGGWDGFC). The chain crosses the membrane as a helical span at residues 183–200 (LVQAFLSCLLTTAFIYLW).

It belongs to the Bcl-2 family. Interacts with BAX. Interacts with BCL2 and BCL2L1/BCLX. Interacts with APAF1. Interacts with ITPR1, ITPR2 and ITPR3; the interaction with ITPR1 is increased in the presence of AHCLY1. Interacts with AHCYL1. Interacts with HIP1R (via ENTH and I/LWEQ domains). Interacts with CASP9. Interacts with BCL2L11/BIM. Interacts with BIK. Interacts with UBQLN4. Interacts with NME2/NM23-H2. Interacts with PMAIP1/NOXA. Interacts with TPX2. Interacts with UBQLN1; in the cytoplasm. Interacts (via BH1 domain) with BECN1. It depends on Ca(2+) as a cofactor. Post-translationally, monoubiquitinated by UBQLN1; results in stabilization of BCL2L10 protein abundance and in relocalization from mitochondria to cytoplasm. In terms of tissue distribution, widely expressed in adult tissues. Preferentially expressed in lung, liver and kidney.

It localises to the mitochondrion. The protein localises to the nucleus membrane. Its subcellular location is the endoplasmic reticulum. The protein resides in the cytoplasm. It is found in the cytoskeleton. It localises to the spindle. In terms of biological role, promotes cell survival by suppressing apoptosis induced by BAX but not BAK. Increases binding of AHCYL1/IRBIT to ITPR1. Reduces ITPR1-mediated calcium release from the endoplasmic reticulum cooperatively with AHCYL1/IRBIT under normal cellular conditions. Under apoptotic stress conditions, dissociates from ITPR1 and is displaced from mitochondria-associated endoplasmic reticulum membranes, leading to increased Ca(2+) transfer to mitochondria which promotes apoptosis. Required for the correct formation of the microtubule organizing center during oocyte cell division, potentially via regulation of protein abundance and localization of other microtubule organizing center components such as AURKA and TPX2. The chain is Bcl-2-like protein 10 from Homo sapiens (Human).